Consider the following 373-residue polypeptide: Dual-specificity RNA methyltransferase RlmN (373 aa).

The Proton acceptor role is filled by E94. The Radical SAM core domain occupies 100 to 339; sequence EDDRATLCVS…VIVRKTRGDD (240 aa). C107 and C344 form a disulfide bridge. [4Fe-4S] cluster is bound by residues C114, C118, and C121. Residues 168 to 169, S200, 222 to 224, and N301 each bind S-adenosyl-L-methionine; these read GE and SIH. C344 (S-methylcysteine intermediate) is an active-site residue.

This sequence belongs to the radical SAM superfamily. RlmN family. It depends on [4Fe-4S] cluster as a cofactor.

It localises to the cytoplasm. It carries out the reaction adenosine(2503) in 23S rRNA + 2 reduced [2Fe-2S]-[ferredoxin] + 2 S-adenosyl-L-methionine = 2-methyladenosine(2503) in 23S rRNA + 5'-deoxyadenosine + L-methionine + 2 oxidized [2Fe-2S]-[ferredoxin] + S-adenosyl-L-homocysteine. The catalysed reaction is adenosine(37) in tRNA + 2 reduced [2Fe-2S]-[ferredoxin] + 2 S-adenosyl-L-methionine = 2-methyladenosine(37) in tRNA + 5'-deoxyadenosine + L-methionine + 2 oxidized [2Fe-2S]-[ferredoxin] + S-adenosyl-L-homocysteine. Functionally, specifically methylates position 2 of adenine 2503 in 23S rRNA and position 2 of adenine 37 in tRNAs. m2A2503 modification seems to play a crucial role in the proofreading step occurring at the peptidyl transferase center and thus would serve to optimize ribosomal fidelity. The polypeptide is Dual-specificity RNA methyltransferase RlmN (Shewanella putrefaciens (strain CN-32 / ATCC BAA-453)).